Consider the following 81-residue polypeptide: Large ribosomal subunit protein bL31B (81 aa).

This sequence belongs to the bacterial ribosomal protein bL31 family. Type B subfamily. Part of the 50S ribosomal subunit.

The sequence is that of Large ribosomal subunit protein bL31B from Halalkalibacterium halodurans (strain ATCC BAA-125 / DSM 18197 / FERM 7344 / JCM 9153 / C-125) (Bacillus halodurans).